A 136-amino-acid polypeptide reads, in one-letter code: Psoriasis susceptibility 1 candidate gene 2 protein (136 aa).

Residues 1-22 form the signal peptide; it reads MILNWKLLGILVLCLHTRGISG. The disordered stretch occupies residues 20-136; that stretch reads ISGSEGHPSH…DLDPPREEYR (117 aa). 2 stretches are compositionally biased toward pro residues: residues 44–69 and 84–116; these read PQGPPVPGDPWPGAPPLFEDPPPTRP and PEPPRTDPPQPPRPDDPWPAGPQPPENPWPPAP. The span at 118–136 shows a compositional bias: basic and acidic residues; that stretch reads VDNRPQEEPDLDPPREEYR.

Expressed in skin. Also expressed in heart and skeletal muscle.

Its subcellular location is the secreted. The polypeptide is Psoriasis susceptibility 1 candidate gene 2 protein (PSORS1C2) (Homo sapiens (Human)).